We begin with the raw amino-acid sequence, 21 residues long: Histone H2B 1 (21 aa).

Positions 1 to 21 (MPDPAKTAPKKGSKKAVTKXA) are disordered. 2 positions are modified to N6-acetyllysine: K6 and K11. Residues 8–21 (APKKGSKKAVTKXA) are compositionally biased toward basic residues. S13 carries the phosphoserine modification. N6-acetyllysine occurs at positions 14 and 19. K19 is covalently cross-linked (Glycyl lysine isopeptide (Lys-Gly) (interchain with G-Cter in ubiquitin)).

The protein belongs to the histone H2B family. The nucleosome is a histone octamer containing two molecules each of H2A, H2B, H3 and H4 assembled in one H3-H4 heterotetramer and two H2A-H2B heterodimers. The octamer wraps approximately 147 bp of DNA. Post-translationally, monoubiquitination at the C-terminal Lys gives a specific tag for epigenetic transcriptional activation and is also prerequisite for histone H3 'Lys-4' and 'Lys-79' methylation. Phosphorylated during apoptosis; which facilitates apoptotic chromatin condensation.

It localises to the nucleus. The protein resides in the chromosome. Its function is as follows. Core component of nucleosome. Nucleosomes wrap and compact DNA into chromatin, limiting DNA accessibility to the cellular machineries which require DNA as a template. Histones thereby play a central role in transcription regulation, DNA repair, DNA replication and chromosomal stability. DNA accessibility is regulated via a complex set of post-translational modifications of histones, also called histone code, and nucleosome remodeling. Has broad-spectrum antimicrobial and antibacterial activity. It is important in the antimicrobial defenses of fish skin and possesses strong activity against saprolegnia, the most common fungal infection in fish. It is also inhibitory to fish bacterial pathogens, such as aeromonas hydrophila, vibrio alginolyticus and E.coli D31. The sequence is that of Histone H2B 1 from Ictalurus punctatus (Channel catfish).